The following is a 218-amino-acid chain: MQVHVIRRENRALYAGLLEKYFRIRHQIYVVERGWKELDRPDGREIDQFDTEDAVYLLGVDNDDIVAGMRMVPTTSPTLLSDVFPQLALAGPVRRPDAYELSRIFVVPRKRGEHGGPRAEAVIQAAAMEYGLSIGLSAFTIVLETWWLPRLVDQGWKAKPLGLPQDINGFSTTAVIVDVDDDAWVGICNRRSVPGPTLEWRGLEAIRRHSLPEFQVIS.

Belongs to the autoinducer synthase family.

It catalyses the reaction 4-coumaroyl-CoA + S-adenosyl-L-methionine = N-(4-coumaroyl)-L-homoserine lactone + S-methyl-5'-thioadenosine + CoA + H(+). In terms of biological role, catalyzes the synthesis of 4-coumaroyl-homoserine lactone, a quorum-sensing (QS) autoinducer molecule which binds to RpaR transcriptional regulator to regulate expression of QS-dependent genes. This chain is 4-coumaroyl-homoserine lactone synthase, found in Rhodopseudomonas palustris (strain ATCC BAA-98 / CGA009).